A 338-amino-acid polypeptide reads, in one-letter code: Taste receptor type 2 member 39 (338 aa).

The Extracellular portion of the chain corresponds to 1 to 30; sequence MLGRCFPPDTKEKQQLRMTKLCDPAESELS. A helical transmembrane segment spans residues 31-51; it reads PFLITLILAVLLAEYLIGIIA. The Cytoplasmic segment spans residues 52 to 74; sequence NGFIMAIHAAEWVQNKAVSTSGR. The chain crosses the membrane as a helical span at residues 75 to 95; sequence ILVFLSVSRIALQSLMMLEIT. Over 96–116 the chain is Extracellular; that stretch reads ISSTSLSFYSEDAVYYAFKIS. The helical transmembrane segment at 117–137 threads the bilayer; it reads FIFLNFCSLWFAAWLSFFYFV. The Cytoplasmic portion of the chain corresponds to 138–156; that stretch reads KIANFSYPLFLKLRWRITG. A helical membrane pass occupies residues 157 to 177; it reads LIPWLLWLSVFISFSHSMFCI. Topologically, residues 178–205 are extracellular; that stretch reads NICTVYCNNSFPIHSSNSTKKTYLSEIN. N-linked (GlcNAc...) asparagine glycosylation is found at N185 and N194. Residues 206 to 226 traverse the membrane as a helical segment; sequence VVGLAFFFNLGIVTPLIMFIL. Residues 227 to 262 are Cytoplasmic-facing; it reads TATLLILSLKRHTLHMGSNATGSNDPSMEAHMGAIK. The helical transmembrane segment at 263-283 threads the bilayer; it reads AISYFLILYIFNAVALFIYLS. Topologically, residues 284-291 are extracellular; that stretch reads NMFDINSL. The chain crosses the membrane as a helical span at residues 292-312; that stretch reads WNNLCQIIMAAYPAGHSILPI. Residues 313–338 lie on the Cytoplasmic side of the membrane; sequence QDNPGLRRAWKRLQLRLHLYPKEWTL.

The protein belongs to the G-protein coupled receptor T2R family.

The protein localises to the membrane. Functionally, receptor that may play a role in the perception of bitterness and is gustducin-linked. May play a role in sensing the chemical composition of the gastrointestinal content. The activity of this receptor may stimulate alpha gustducin, mediate PLC-beta-2 activation and lead to the gating of TRPM5. This is Taste receptor type 2 member 39 (TAS2R39) from Pan paniscus (Pygmy chimpanzee).